The sequence spans 120 residues: Large ribosomal subunit protein bL12 (120 aa).

It belongs to the bacterial ribosomal protein bL12 family. Homodimer. Part of the ribosomal stalk of the 50S ribosomal subunit. Forms a multimeric L10(L12)X complex, where L10 forms an elongated spine to which 2 to 4 L12 dimers bind in a sequential fashion. Binds GTP-bound translation factors.

Its function is as follows. Forms part of the ribosomal stalk which helps the ribosome interact with GTP-bound translation factors. Is thus essential for accurate translation. This is Large ribosomal subunit protein bL12 from Clostridium botulinum (strain Alaska E43 / Type E3).